A 162-amino-acid chain; its full sequence is UPF0114 protein VCM66_0196 (162 aa).

The next 4 membrane-spanning stretches (helical) occupy residues 15–35 (IMAPIYLGLSLLLLALGIKFF), 53–73 (LILVALSLIDVSLVGGLIVMV), 109–126 (VSASIVAISSIHLLKVFM), and 136–156 (IKWYLLLHITFVVSAFAMGYL).

Belongs to the UPF0114 family.

The protein localises to the cell membrane. The chain is UPF0114 protein VCM66_0196 from Vibrio cholerae serotype O1 (strain M66-2).